The following is a 403-amino-acid chain: Aspartic protease pepA (403 aa).

Positions 1-20 (MVLITQLGAALAVFSALTVA) are cleaved as a signal peptide. A propeptide spans 21–67 (APTKGKARFSAPQVGIPKKAKHHPAAAYARALHKFGMKIPKAVSDAA) (activation peptide). In terms of domain architecture, Peptidase A1 spans 82-400 (YVTQVTVGGS…DTQGPRIGFA (319 aa)). D98 is an active-site residue. N270 carries N-linked (GlcNAc...) asparagine glycosylation. D293 is a catalytic residue. C329 and C362 are disulfide-bonded.

Belongs to the peptidase A1 family. In terms of assembly, monomer.

Its subcellular location is the secreted. In terms of biological role, secreted aspartic endopeptidase that allows assimilation of proteinaceous substrates. The scissile peptide bond is attacked by a nucleophilic water molecule activated by two aspartic residues in the active site. Shows a broad primary substrate specificity. Favors hydrophobic residues at the P1 and P1' positions. The chain is Aspartic protease pepA from Arthroderma gypseum (strain ATCC MYA-4604 / CBS 118893) (Microsporum gypseum).